We begin with the raw amino-acid sequence, 1388 residues long: DNA-directed RNA polymerase subunit beta' (1388 aa).

Positions 65, 67, 80, and 83 each coordinate Zn(2+). 3 residues coordinate Mg(2+): Asp456, Asp458, and Asp460. Positions 812, 887, 894, and 897 each coordinate Zn(2+).

It belongs to the RNA polymerase beta' chain family. In terms of assembly, the RNAP catalytic core consists of 2 alpha, 1 beta, 1 beta' and 1 omega subunit. When a sigma factor is associated with the core the holoenzyme is formed, which can initiate transcription. Mg(2+) serves as cofactor. The cofactor is Zn(2+).

It carries out the reaction RNA(n) + a ribonucleoside 5'-triphosphate = RNA(n+1) + diphosphate. Its function is as follows. DNA-dependent RNA polymerase catalyzes the transcription of DNA into RNA using the four ribonucleoside triphosphates as substrates. The polypeptide is DNA-directed RNA polymerase subunit beta' (Protochlamydia amoebophila (strain UWE25)).